Here is a 288-residue protein sequence, read N- to C-terminus: MEGLLIALIPMFAWGSIGFVSNKIGGRPNQQTFGMTLGALLFAIIVWLFKQPEMTASLWIFGILGGILWSVGQNGQFQAMKYMGVSVANPLSSGAQLVGGSLVGALVFHEWTKPIQFILGLTALTLLVIGFYFSSKRDVSEQALATHQEFSKGFATIAYSTVGYISYAVLFNNIMKFDAMAVILPMAVGMCLGAICFMKFRVNFEAVVVKNMITGLMWGVGNVFMLLAAAKAGLAIAFSFSQLGVIISIIGGILFLGETKTKKEQKWVVMGILCFVMGAILLGIVKSY.

10 helical membrane-spanning segments follow: residues 4 to 26, 33 to 50, 55 to 72, 85 to 107, 117 to 134, 154 to 171, 181 to 200, 207 to 229, 234 to 256, and 268 to 285; these read LLIA…KIGG, FGMT…WLFK, TASL…WSVG, VSVA…GALV, FILG…FYFS, FATI…AVLF, AVIL…FMKF, VVVK…LLAA, LAIA…ILFL, and VVMG…LGIV.

It belongs to the GRP transporter (TC 2.A.7.5) family.

The protein localises to the cell membrane. This chain is Putative sugar uptake protein gbs2116, found in Streptococcus agalactiae serotype III (strain NEM316).